The primary structure comprises 190 residues: 7-methyl-GTP pyrophosphatase (190 aa).

Aspartate 69 functions as the Proton acceptor in the catalytic mechanism.

It belongs to the Maf family. YceF subfamily. A divalent metal cation is required as a cofactor.

Its subcellular location is the cytoplasm. The catalysed reaction is N(7)-methyl-GTP + H2O = N(7)-methyl-GMP + diphosphate + H(+). Functionally, nucleoside triphosphate pyrophosphatase that hydrolyzes 7-methyl-GTP (m(7)GTP). May have a dual role in cell division arrest and in preventing the incorporation of modified nucleotides into cellular nucleic acids. This is 7-methyl-GTP pyrophosphatase from Xanthomonas axonopodis pv. citri (strain 306).